The chain runs to 1221 residues: WEB family protein At4g27595, chloroplastic (1221 aa).

A disordered region spans residues M1–P68. Residues M1 to M82 constitute a chloroplast transit peptide. Residues S32–P58 show a composition bias toward polar residues. Coiled coils occupy residues T95–H149, T202–K543, and A587–I1084. Basic and acidic residues predominate over residues E1073–E1083. The segment at E1073–K1221 is disordered. The segment covering I1084–Q1097 has biased composition (polar residues). Composition is skewed to basic and acidic residues over residues A1106–T1116 and K1129–D1160. The segment covering N1175 to E1187 has biased composition (polar residues).

It belongs to the WEB family.

The protein resides in the plastid. It localises to the chloroplast. The sequence is that of WEB family protein At4g27595, chloroplastic from Arabidopsis thaliana (Mouse-ear cress).